The following is a 333-amino-acid chain: MIPPKQQTALKITPEGRIAAVSSPLPSLQDNELLVCVKSIALNPFDAKSAEMSPTIGATLGCDFAGKIVATGSNANDFNFSIGDRVCGCVFGNNPNRLDNGAFAEYVAVPADLLLRIPEHMDYNEAATLGVGLATVGMSLYHCLRLPMKPEQAGKSPSGYAAITTCSPHNFNLVKSLGATAAFDYHSPTCGRQIRDFSSGNLWYALDCITDTRSMAVCYEAIGPSGGRYLSLDPFPIRGHTRRSVKPNWVLSVTMYNQPIPWKRPFKRDACPQDLEFAKSWFQIAQRMIDAGEIRPHTSDVKAGGWNGIPGGLELLQKGEVSGRKLVYEVASH.

45–48 (FDAK) serves as a coordination point for NADP(+). 131-138 (VGLATVGM) contacts substrate. NADP(+) is bound by residues 167 to 170 (SPHN), Tyr185, and 232 to 233 (LD). 252-256 (SVTMY) serves as a coordination point for substrate. Position 321–322 (321–322 (VS)) interacts with NADP(+).

It belongs to the zinc-containing alcohol dehydrogenase family. As to quaternary structure, monomer.

It participates in secondary metabolite biosynthesis. Its function is as follows. Trans-enoyl reductase; part of the gene cluster that mediates the biosynthesis of aspyridones. The polyketide-amino acid backbone preaspyridone A is first assembled by the PKS-NRPS hybrid apdA. The assembly of preaspyridone A is initiated by loading of malonyl-CoA onto apdA, followed by decarboxylation to yield the acetyl starter unit. The growing polyketide chain then elongates into a tetraketide. The adpA PKS module catalyzes three Claisen condensations, as well as beta-keto processing and methylation. Alpha-methylation step during polyketide synthesis is a prerequisite and a key checkpoint for chain transfer between PKS and NRPS modules. The downstream NRPS module contains the condensation (C), adenylation (A), and thiolation (T) domains and catalyzes the incorporation of tyrosine via the formation of the L-tyrosinyl-thioester and the amide linkage between L-tyrosinyl-thioester and the tetraketide. The bimodular assembly line is terminated with a reductase (R) domain that facilitates formation and release of the tetramic acid product. Because apdA lacks a designated enoylreductase (ER) domain, the required activity is provided the enoyl reductase apdC. ApdC appears to operate with different stereoselectivity in different PKS cycle. Combined with apdC, apdA is proposed to synthesize preaspyridone A via about 20 enzymatic steps. A number of oxidative steps performed successively by the cytochrome P450 monooxygenases apdE and apdB are required for the conversion of preaspyridone A to aspyridone A. The cytochrome P450 monooxygenase apdE is responsible for the oxidative dephenylation of preaspyridone A. Finally, the predicted FAD-dependent monooxygenase apdD and the acyl-CoA dehydrogenase apdG may be involved in the transformation of aspyridone A into aspyridone B. The sequence is that of Trans-enoyl reductase apdC from Emericella nidulans (strain FGSC A4 / ATCC 38163 / CBS 112.46 / NRRL 194 / M139) (Aspergillus nidulans).